A 677-amino-acid polypeptide reads, in one-letter code: WD repeat-containing protein 48 (677 aa).

Tyr28 bears the Phosphotyrosine mark. WD repeat units lie at residues 28 to 67 (YNRN…QDPY), 73 to 112 (HHTD…CMST), 115 to 154 (THKD…ALTA), 166 to 205 (GNKD…KLMK), 208 to 247 (GHTD…CIAT), 250 to 289 (VHDE…IRVL), 292 to 334 (EEKA…NFRA), and 358 to 452 (KGGA…GFSS). Lys214 is modified (N6-acetyllysine). Lys578 carries the N6-acetyllysine modification. The disordered stretch occupies residues 607 to 628 (LDNESQTTSSSNNEKPGEQEKE). Positions 609–620 (NESQTTSSSNNE) are enriched in low complexity. Thr613 carries the phosphothreonine modification.

This sequence belongs to the WD repeat WDR48 family. As to quaternary structure, interacts with USP46. Interacts with USP1. Interacts with USP12. Component of the USP12-WDR20-WDR48 deubiquitinating complex. Component of the USP12-DMWD-WDR48 deubiquitinating complex. Interacts with PHLPP1. Interacts with RAD51AP1; the interaction is direct and promotes formation of a trimeric complex with RAD51 via RAD51AP1. Interacts with ATAD5; the interaction regulates USP1-mediated PCNA deubiquitination. Interacts with RAD51; the interaction is enhanced under replication stress. Interacts with ITCH; the interaction is more efficient when both USP12 and WDR48/UAF1 are involved and may facilitate recruitment of the USP12 deubiquitinating complex to Notch.

Its subcellular location is the nucleus. The protein localises to the cytoplasm. The protein resides in the lysosome. It is found in the late endosome. Regulator of deubiquitinating complexes, which acts as a strong activator of USP1, USP12 and USP46. Enhances the USP1-mediated deubiquitination of FANCD2; USP1 being almost inactive by itself. Activates deubiquitination by increasing the catalytic turnover without increasing the affinity of deubiquitinating enzymes for the substrate. Also activates deubiquitinating activity of complexes containing USP12. Docks at the distal end of the USP12 fingers domain and induces a cascade of structural changes leading to the activation of the enzyme. Together with RAD51AP1, promotes DNA repair by stimulating RAD51-mediated homologous recombination. Binds single-stranded DNA (ssDNA) and double-stranded DNA (dsDNA). DNA-binding is required both for USP1-mediated deubiquitination of FANCD2 and stimulation of RAD51-mediated homologous recombination: both WDR48/UAF1 and RAD51AP1 have coordinated role in DNA-binding during these processes. Together with ATAD5 and by regulating USP1 activity, has a role in PCNA-mediated translesion synthesis (TLS) by deubiquitinating monoubiquitinated PCNA. Together with ATAD5, has a role in recruiting RAD51 to stalled forks during replication stress. The polypeptide is WD repeat-containing protein 48 (WDR48) (Pongo abelii (Sumatran orangutan)).